The following is a 111-amino-acid chain: Small ribosomal subunit protein bS16 (111 aa).

The interval 92 to 111 (EKGVKESNEIVEPEGEEVKE) is disordered. Residues 100 to 111 (EIVEPEGEEVKE) are compositionally biased toward acidic residues.

Belongs to the bacterial ribosomal protein bS16 family.

The polypeptide is Small ribosomal subunit protein bS16 (Petrotoga mobilis (strain DSM 10674 / SJ95)).